The chain runs to 324 residues: Ribose-phosphate pyrophosphokinase 1 (324 aa).

ATP is bound by residues 39–41 and 98–99; these read DGE and RQ. His132 and Asp174 together coordinate Mg(2+). Lys197 is a catalytic residue. Residues Arg199, Asp223, and 227–231 each bind D-ribose 5-phosphate; that span reads DTAGT.

This sequence belongs to the ribose-phosphate pyrophosphokinase family. Class I subfamily. Homohexamer. The cofactor is Mg(2+).

Its subcellular location is the cytoplasm. It carries out the reaction D-ribose 5-phosphate + ATP = 5-phospho-alpha-D-ribose 1-diphosphate + AMP + H(+). It participates in metabolic intermediate biosynthesis; 5-phospho-alpha-D-ribose 1-diphosphate biosynthesis; 5-phospho-alpha-D-ribose 1-diphosphate from D-ribose 5-phosphate (route I): step 1/1. Functionally, involved in the biosynthesis of the central metabolite phospho-alpha-D-ribosyl-1-pyrophosphate (PRPP) via the transfer of pyrophosphoryl group from ATP to 1-hydroxyl of ribose-5-phosphate (Rib-5-P). This Lactococcus lactis subsp. lactis (strain IL1403) (Streptococcus lactis) protein is Ribose-phosphate pyrophosphokinase 1.